We begin with the raw amino-acid sequence, 401 residues long: Patatin-like protein 4 (401 aa).

One can recognise a PNPLA domain in the interval 17–218 (LSLDGGGVRG…TANDPTLVGM (202 aa)). Residues 21-26 (GGGVRG) carry the GXGXXG motif. Residues 60–64 (GTSTG) carry the GXSXG motif. Catalysis depends on Ser62, which acts as the Nucleophile. Residue Asp205 is the Proton acceptor of the active site. Positions 205–207 (DGG) match the DGA/G motif.

Belongs to the patatin family.

In terms of biological role, possesses non-specific lipolytic acyl hydrolase (LAH) activity. Hydrolyzes phospholipids as well as galactolipids. May play a role in disease resistance. The chain is Patatin-like protein 4 (PLP4) from Arabidopsis thaliana (Mouse-ear cress).